We begin with the raw amino-acid sequence, 148 residues long: Small ribosomal subunit protein uS12 (148 aa).

It belongs to the universal ribosomal protein uS12 family. In terms of assembly, part of the 30S ribosomal subunit.

Functionally, with S4 and S5 plays an important role in translational accuracy. Located at the interface of the 30S and 50S subunits. The sequence is that of Small ribosomal subunit protein uS12 from Methanocaldococcus jannaschii (strain ATCC 43067 / DSM 2661 / JAL-1 / JCM 10045 / NBRC 100440) (Methanococcus jannaschii).